Consider the following 247-residue polypeptide: Large ribosomal subunit protein uL30 (247 aa).

M1 bears the N-acetylmethionine mark. 4 tandem repeats follow at residues 7–17 (KKKVPAVPETL), 18–29 (KKKRRNFAELKI), 30–41 (KRLRKKFAQKML), and 42–53 (RKARRKLIYEKA). Residues 7 to 53 (KKKVPAVPETLKKKRRNFAELKIKRLRKKFAQKMLRKARRKLIYEKA) are 4 X 12 AA tandem repeats. T16 carries the post-translational modification Phosphothreonine. An N6-acetyllysine modification is found at K123. K126 is modified (N6-succinyllysine). At Y138 the chain carries Phosphotyrosine.

The protein belongs to the universal ribosomal protein uL30 family. As to quaternary structure, component of the large ribosomal subunit. Homodimer. Interacts with DHX33.

The protein resides in the cytoplasm. Functionally, component of the large ribosomal subunit. The ribosome is a large ribonucleoprotein complex responsible for the synthesis of proteins in the cell. Binds to G-rich structures in 28S rRNA and in mRNAs. Plays a regulatory role in the translation apparatus; inhibits cell-free translation of mRNAs. The protein is Large ribosomal subunit protein uL30 (RPL7) of Pongo abelii (Sumatran orangutan).